The sequence spans 401 residues: Argininosuccinate synthase (401 aa).

An ATP-binding site is contributed by 8 to 16; the sequence is AYSGGLDTS. An L-citrulline-binding site is contributed by Tyr86. Gly116 provides a ligand contact to ATP. L-aspartate is bound by residues Thr118, Asn122, and Asp123. Asn122 lines the L-citrulline pocket. 4 residues coordinate L-citrulline: Arg126, Ser174, Glu258, and Tyr270.

It belongs to the argininosuccinate synthase family. Type 1 subfamily. Homotetramer.

Its subcellular location is the cytoplasm. The catalysed reaction is L-citrulline + L-aspartate + ATP = 2-(N(omega)-L-arginino)succinate + AMP + diphosphate + H(+). It functions in the pathway amino-acid biosynthesis; L-arginine biosynthesis; L-arginine from L-ornithine and carbamoyl phosphate: step 2/3. This is Argininosuccinate synthase from Acidothermus cellulolyticus (strain ATCC 43068 / DSM 8971 / 11B).